We begin with the raw amino-acid sequence, 292 residues long: Large ribosomal subunit protein bL19m (292 aa).

Residues 40–61 (PVRQQSTGPSEPGAFQPPPKPV) form a disordered region. S77 is subject to Phosphoserine.

The protein belongs to the bacterial ribosomal protein bL19 family. As to quaternary structure, component of the mitochondrial ribosome large subunit (39S) which comprises a 16S rRNA and about 50 distinct proteins.

The protein localises to the mitochondrion. This chain is Large ribosomal subunit protein bL19m (MRPL19), found in Pongo abelii (Sumatran orangutan).